Consider the following 24-residue polypeptide: Brevinin-1JDc (24 aa).

The cysteines at positions 18 and 24 are disulfide-linked.

In terms of tissue distribution, expressed by the skin glands.

The protein resides in the secreted. In terms of biological role, has antibacterial activity against E.coli ATCC 25992 (MIC=49 uM), E.coli CIB 84492 (MIC=25 uM), S.aureus ATCC 25923 (MIC=6 uM) and S.aureus CIB 85462 (MIC=3 uM). The polypeptide is Brevinin-1JDc (Odorrana jingdongensis (Jingdong frog)).